We begin with the raw amino-acid sequence, 213 residues long: Putative glutathione-dependent formaldehyde-activating enzyme (213 aa).

The region spanning 19-165 (FPGGTLKCLC…FRELGLETYD (147 aa)) is the CENP-V/GFA domain. 7 residues coordinate Zn(2+): C26, C28, C47, C49, C52, C94, and C97.

Belongs to the Gfa family. Zn(2+) is required as a cofactor.

It carries out the reaction S-(hydroxymethyl)glutathione = glutathione + formaldehyde. Its pathway is one-carbon metabolism; formaldehyde degradation; formate from formaldehyde (glutathione route): step 1/3. Functionally, catalyzes the condensation of formaldehyde and glutathione to S-hydroxymethylglutathione. In Podospora anserina (strain S / ATCC MYA-4624 / DSM 980 / FGSC 10383) (Pleurage anserina), this protein is Putative glutathione-dependent formaldehyde-activating enzyme.